The primary structure comprises 225 residues: Biosynthetic peptidoglycan transglycosylase (225 aa).

The chain crosses the membrane as a helical span at residues 12 to 32 (IWFVAWRFLLLFVIVLFLFRF).

This sequence belongs to the glycosyltransferase 51 family.

It localises to the cell inner membrane. The catalysed reaction is [GlcNAc-(1-&gt;4)-Mur2Ac(oyl-L-Ala-gamma-D-Glu-L-Lys-D-Ala-D-Ala)](n)-di-trans,octa-cis-undecaprenyl diphosphate + beta-D-GlcNAc-(1-&gt;4)-Mur2Ac(oyl-L-Ala-gamma-D-Glu-L-Lys-D-Ala-D-Ala)-di-trans,octa-cis-undecaprenyl diphosphate = [GlcNAc-(1-&gt;4)-Mur2Ac(oyl-L-Ala-gamma-D-Glu-L-Lys-D-Ala-D-Ala)](n+1)-di-trans,octa-cis-undecaprenyl diphosphate + di-trans,octa-cis-undecaprenyl diphosphate + H(+). It functions in the pathway cell wall biogenesis; peptidoglycan biosynthesis. Functionally, peptidoglycan polymerase that catalyzes glycan chain elongation from lipid-linked precursors. In Marinomonas sp. (strain MWYL1), this protein is Biosynthetic peptidoglycan transglycosylase.